A 162-amino-acid polypeptide reads, in one-letter code: Large ribosomal subunit protein bL9 (162 aa).

The protein belongs to the bacterial ribosomal protein bL9 family.

Its function is as follows. Binds to the 23S rRNA. The protein is Large ribosomal subunit protein bL9 of Chlorobaculum parvum (strain DSM 263 / NCIMB 8327) (Chlorobium vibrioforme subsp. thiosulfatophilum).